A 395-amino-acid chain; its full sequence is NAD(P)H-quinone oxidoreductase subunit H (395 aa).

Belongs to the complex I 49 kDa subunit family. NDH-1 can be composed of about 15 different subunits; different subcomplexes with different compositions have been identified which probably have different functions.

The protein localises to the cellular thylakoid membrane. It carries out the reaction a plastoquinone + NADH + (n+1) H(+)(in) = a plastoquinol + NAD(+) + n H(+)(out). The catalysed reaction is a plastoquinone + NADPH + (n+1) H(+)(in) = a plastoquinol + NADP(+) + n H(+)(out). Its function is as follows. NDH-1 shuttles electrons from an unknown electron donor, via FMN and iron-sulfur (Fe-S) centers, to quinones in the respiratory and/or the photosynthetic chain. The immediate electron acceptor for the enzyme in this species is believed to be plastoquinone. Couples the redox reaction to proton translocation, and thus conserves the redox energy in a proton gradient. Cyanobacterial NDH-1 also plays a role in inorganic carbon-concentration. In Prochlorococcus marinus subsp. pastoris (strain CCMP1986 / NIES-2087 / MED4), this protein is NAD(P)H-quinone oxidoreductase subunit H.